The primary structure comprises 168 residues: 6,7-dimethyl-8-ribityllumazine synthase (168 aa).

Residues Trp31, 65 to 67 (SFE), and 90 to 92 (NVI) contribute to the 5-amino-6-(D-ribitylamino)uracil site. Residue 95–96 (ET) participates in (2S)-2-hydroxy-3-oxobutyl phosphate binding. The active-site Proton donor is the His98. Phe123 lines the 5-amino-6-(D-ribitylamino)uracil pocket. Arg137 lines the (2S)-2-hydroxy-3-oxobutyl phosphate pocket.

The protein belongs to the DMRL synthase family.

The catalysed reaction is (2S)-2-hydroxy-3-oxobutyl phosphate + 5-amino-6-(D-ribitylamino)uracil = 6,7-dimethyl-8-(1-D-ribityl)lumazine + phosphate + 2 H2O + H(+). It participates in cofactor biosynthesis; riboflavin biosynthesis; riboflavin from 2-hydroxy-3-oxobutyl phosphate and 5-amino-6-(D-ribitylamino)uracil: step 1/2. Functionally, catalyzes the formation of 6,7-dimethyl-8-ribityllumazine by condensation of 5-amino-6-(D-ribitylamino)uracil with 3,4-dihydroxy-2-butanone 4-phosphate. This is the penultimate step in the biosynthesis of riboflavin. This Christiangramia forsetii (strain DSM 17595 / CGMCC 1.15422 / KT0803) (Gramella forsetii) protein is 6,7-dimethyl-8-ribityllumazine synthase.